Consider the following 688-residue polypeptide: Glycine--tRNA ligase beta subunit (688 aa).

This sequence belongs to the class-II aminoacyl-tRNA synthetase family. In terms of assembly, tetramer of two alpha and two beta subunits.

The protein localises to the cytoplasm. It carries out the reaction tRNA(Gly) + glycine + ATP = glycyl-tRNA(Gly) + AMP + diphosphate. This is Glycine--tRNA ligase beta subunit from Aliivibrio fischeri (strain ATCC 700601 / ES114) (Vibrio fischeri).